The sequence spans 144 residues: MKIALIAHDEKKAEMVAFATAYAPVLANHELYATGTTGLRIQEATGLAVHRFQSGPYGGDQEIGAMIARNEMDLVIFFRDPLTAQPHEPDISALMRLCDVYAVPLATNIGTAELLIRGLERGDLAWRNIVHGRAKSGEEKETER.

The MGS-like domain occupies 1–144 (MKIALIAHDE…KSGEEKETER (144 aa)). Residues H8, K12, 34 to 37 (TGTT), and 54 to 55 (SG) contribute to the substrate site. D60 serves as the catalytic Proton donor/acceptor. Position 87 (H87) interacts with substrate.

It belongs to the methylglyoxal synthase family.

The enzyme catalyses dihydroxyacetone phosphate = methylglyoxal + phosphate. Functionally, catalyzes the formation of methylglyoxal from dihydroxyacetone phosphate. The polypeptide is Methylglyoxal synthase (Geobacillus thermodenitrificans (strain NG80-2)).